We begin with the raw amino-acid sequence, 229 residues long: MYDISGWKHVFKLDPNKELSDEHLEMICESGTDAVIVGGSDGVTIDNVLHMLVSIRRYAVPCVLEVSDVEAITPGFDFYYIPSVLNSRKVEWVTGVHHEALKEFGDIMDWDEIFMEGYCVLNPEAKVAQLTDAKCDVTEDDVIAYARLADKLLRLPIFYLEYSGTYGDVELVKNVKAELKQAKLYYGGGISNAEQAEEMAQHADTVVVGNIIYDDIKAALKTVKAVKGE.

Lys12 is a binding site for sn-glycerol 1-phosphate. Residues Asp14 and Ser40 each coordinate Mg(2+). Residues 159–164, Gly189, and 209–210 each bind sn-glycerol 1-phosphate; these read YLEYSG and GN.

Belongs to the GGGP/HepGP synthase family. Group I subfamily. In terms of assembly, homodimer. Mg(2+) is required as a cofactor.

It carries out the reaction sn-glycerol 1-phosphate + all-trans-heptaprenyl diphosphate = 3-heptaprenyl-sn-glycero-1-phosphate + diphosphate. It functions in the pathway membrane lipid metabolism; glycerophospholipid metabolism. In terms of biological role, prenyltransferase that catalyzes in vivo the transfer of the heptaprenyl moiety of heptaprenyl pyrophosphate (HepPP; 35 carbon atoms) to the C3 hydroxyl of sn-glycerol-1-phosphate (G1P), producing heptaprenylglyceryl phosphate (HepGP). This reaction is an ether-bond-formation step in the biosynthesis of archaea-type G1P-based membrane lipids found in Bacillales. The chain is Heptaprenylglyceryl phosphate synthase from Bacillus thuringiensis (strain Al Hakam).